Here is a 505-residue protein sequence, read N- to C-terminus: MTDTVIAPLSALPLLADLPALAPELVLLVTAVCLMLGDLFYPRERVFQQWLTAAGAAVALALTLSMNFSGGATAFGGVFRADGLAAAFKVVCLAALGLTALMSEAFCRHASMRQGEYYSLMAFSTLGMCVMVSAGDAIVLYLGLELMALPIYALVALRTADPRSSEAAIKYFLMGSFASALLLFGLSILYGLTGQTDIAEMAHRLAVSLSVSDMHTLPAAVVALGLVLAGLGFKVATVPFHVWAPDVYEGAPTTVTAFMSVAAKTASFAVLGRVLLQGLPQLSPLWSDALAGLAVLTMLLGNIAALAQTSLKRMLAYSAIAHAGYALLGLAACTPEGLRATAAYLTIYLCMNIGAFAVIIYLSARSGRGRMGEGPDAGEDLDDYRGLAARSPLLAAVMLVFLFSLTGIPPTAGFMGKFMLFRAAFAAGYQITVVVAVVCSTISAWYYLGVAKRMYMQDSQDDAPATSCAITGETGLQAVLAVCLAGAVLWGIFPQSLLFWINVYF.

14 helical membrane passes run 20 to 40 (ALAPELVLLVTAVCLMLGDLF), 59 to 79 (ALALTLSMNFSGGATAFGGVF), 83 to 103 (GLAAAFKVVCLAALGLTALMS), 115 to 135 (GEYYSLMAFSTLGMCVMVSAG), 137 to 157 (AIVLYLGLELMALPIYALVAL), 172 to 192 (FLMGSFASALLLFGLSILYGL), 220 to 240 (AVVALGLVLAGLGFKVATVPF), 251 to 271 (APTTVTAFMSVAAKTASFAVL), 285 to 305 (LWSDALAGLAVLTMLLGNIAA), 314 to 334 (MLAYSAIAHAGYALLGLAACT), 342 to 362 (AAYLTIYLCMNIGAFAVIIYL), 394 to 414 (LAAVMLVFLFSLTGIPPTAGF), 431 to 451 (ITVVVAVVCSTISAWYYLGVA), and 481 to 501 (AVCLAGAVLWGIFPQSLLFWI).

Belongs to the complex I subunit 2 family. NDH-1 is composed of 14 different subunits. Subunits NuoA, H, J, K, L, M, N constitute the membrane sector of the complex.

The protein localises to the cell inner membrane. It catalyses the reaction a quinone + NADH + 5 H(+)(in) = a quinol + NAD(+) + 4 H(+)(out). NDH-1 shuttles electrons from NADH, via FMN and iron-sulfur (Fe-S) centers, to quinones in the respiratory chain. The immediate electron acceptor for the enzyme in this species is believed to be ubiquinone. Couples the redox reaction to proton translocation (for every two electrons transferred, four hydrogen ions are translocated across the cytoplasmic membrane), and thus conserves the redox energy in a proton gradient. The protein is NADH-quinone oxidoreductase subunit N of Desulfovibrio desulfuricans (strain ATCC 27774 / DSM 6949 / MB).